We begin with the raw amino-acid sequence, 185 residues long: MSKFSLKLGSKTLKKNISKKTKKKNSLQKANLFDWDDAETASLSHKPQSKIKIQSIDKFDLDEESSSKKKLVIKLSENADTKKNDAPLVEYVTEKEYNEVPVEEFGDALLRGMGWESDSEQDSKGDKTQSRNKDVSNVSQIHPDGLGIGAKLNKAINVEEASFMPVVKIDKITGTKVDDDKKNKS.

Residues 100 to 149 (VPVEEFGDALLRGMGWESDSEQDSKGDKTQSRNKDVSNVSQIHPDGLGIG) form the G-patch domain. The interval 112-143 (GMGWESDSEQDSKGDKTQSRNKDVSNVSQIHP) is disordered. Residues 121-134 (QDSKGDKTQSRNKD) show a composition bias toward basic and acidic residues.

This sequence belongs to the SPP2 family. As to quaternary structure, belongs to the CWC complex (or CEF1-associated complex), a spliceosome sub-complex reminiscent of a late-stage spliceosome composed of the U2, U5 and U6 snRNAs and at least BUD13, BUD31, BRR2, CDC40, CEF1, CLF1, CUS1, CWC2, CWC15, CWC21, CWC22, CWC23, CWC24, CWC25, CWC27, ECM2, HSH155, IST3, ISY1, LEA1, MSL1, NTC20, PRP8, PRP9, PRP11, PRP19, PRP21, PRP22, PRP45, PRP46, SLU7, SMB1, SMD1, SMD2, SMD3, SMX2, SMX3, SNT309, SNU114, SPP2, SYF1, SYF2, RSE1 and YJU2. Interacts with PRP2.

The protein localises to the cytoplasm. Its subcellular location is the nucleus. Its function is as follows. Involved in pre-mRNA splicing; specifically in the final stages of spliceosome maturation. Promotes the first step of splicing. The chain is Pre-mRNA-splicing factor SPP2 (SPP2) from Saccharomyces cerevisiae (strain ATCC 204508 / S288c) (Baker's yeast).